A 149-amino-acid polypeptide reads, in one-letter code: D-aminoacyl-tRNA deacylase (149 aa).

The Gly-cisPro motif, important for rejection of L-amino acids signature appears at 141–142 (GP).

Belongs to the DTD family. Homodimer.

It is found in the cytoplasm. The catalysed reaction is glycyl-tRNA(Ala) + H2O = tRNA(Ala) + glycine + H(+). It carries out the reaction a D-aminoacyl-tRNA + H2O = a tRNA + a D-alpha-amino acid + H(+). An aminoacyl-tRNA editing enzyme that deacylates mischarged D-aminoacyl-tRNAs. Also deacylates mischarged glycyl-tRNA(Ala), protecting cells against glycine mischarging by AlaRS. Acts via tRNA-based rather than protein-based catalysis; rejects L-amino acids rather than detecting D-amino acids in the active site. By recycling D-aminoacyl-tRNA to D-amino acids and free tRNA molecules, this enzyme counteracts the toxicity associated with the formation of D-aminoacyl-tRNA entities in vivo and helps enforce protein L-homochirality. The protein is D-aminoacyl-tRNA deacylase of Hydrogenovibrio crunogenus (strain DSM 25203 / XCL-2) (Thiomicrospira crunogena).